The chain runs to 545 residues: MTQLTQSSCWQALIADAAKLPHMRDLFAQNPQRFEQMSLNACGLFLDYSKNRADETTLKLLFSLAKEAKLTEKIAAMFNGDIINTTEQRAVLHTALRSKACQDIRVDGVNIVPEVQQTLDKMAQFVDSVQTGQCKGYTGKRITDIVSIGIGGSFLGPKIVSQALRPYWKAGLNCHFVANVDASSICEKLKLLNAETTLFVMSSKSFGTQETLTNTLSAKDWFLDQGATQADIAKHFVAVTSNVTKATEFGMDADNIFPMWDWVGGRYSLWSAIGLPIALLIGMDNFRLLLDGAHQMDEHVKAAPLEQNMPVIMALLSVLYTNFHGAQSHVVLTYDHYLRGLPAYFQQLDMESNGKSVTLNGTQVDYSTGPVIWGGEGTNGQHAYHQLLHQGTALIPADFIMPLQSHNPLGEHHAQLASNCFGQTQALMQGRTFEEAMAELSQSSLNEADKTLIAKHKVMLGNKPSNTLLMDKLTPQTLGSLIALYEHRTLVQGAIWQINSFDQWGVELGKQLGNDVLARIGAAHNATELDSSSNALINRFRQGKI.

Glu351 functions as the Proton donor in the catalytic mechanism. Catalysis depends on residues His382 and Lys510.

This sequence belongs to the GPI family.

It localises to the cytoplasm. The catalysed reaction is alpha-D-glucose 6-phosphate = beta-D-fructose 6-phosphate. The protein operates within carbohydrate biosynthesis; gluconeogenesis. Its pathway is carbohydrate degradation; glycolysis; D-glyceraldehyde 3-phosphate and glycerone phosphate from D-glucose: step 2/4. Catalyzes the reversible isomerization of glucose-6-phosphate to fructose-6-phosphate. This Shewanella denitrificans (strain OS217 / ATCC BAA-1090 / DSM 15013) protein is Glucose-6-phosphate isomerase.